Here is a 402-residue protein sequence, read N- to C-terminus: Serine/threonine-protein phosphatase 4 regulatory subunit 2 (402 aa).

Over residues 206-248 (MDEEFEDEDYEDHEDEEEDEEDEDNDSDVDEMEAEEVEEDASD) the composition is skewed to acidic residues. Disordered regions lie at residues 206-270 (MDEE…DVTD), 291-311 (SVLS…ILSR), and 331-402 (GFIT…KKRM). Low complexity predominate over residues 348–358 (SSSSMVSPVVS). Residues 371-396 (INTFISPDTTNSVTQAEKNELSTSPL) are compositionally biased toward polar residues.

This sequence belongs to the PPP4R2 family. As to quaternary structure, regulatory subunit (R2) of the histone H2A phosphatase complex (HTP-C) consisting of PPH3, PSY2 and PSY4.

Its subcellular location is the nucleus. Its function is as follows. Regulatory subunit of the histone H2A phosphatase complex, which dephosphorylates H2AS128ph (gamma-H2A) that has been displaced from sites of DNA lesions in the double-stranded DNA break repair process. Dephosphorylation is necessary for efficient recovery from the DNA damage checkpoint. The chain is Serine/threonine-protein phosphatase 4 regulatory subunit 2 (PSY4) from Kluyveromyces lactis (strain ATCC 8585 / CBS 2359 / DSM 70799 / NBRC 1267 / NRRL Y-1140 / WM37) (Yeast).